We begin with the raw amino-acid sequence, 165 residues long: Glutamyl-tRNA(Gln) amidotransferase subunit F, mitochondrial (165 aa).

The N-terminal 19 residues, 1-19 (MKSILRSTTRNLITSSRRF), are a transit peptide targeting the mitochondrion.

The protein belongs to the GatF family. As to quaternary structure, subunit of the heterotrimeric GatFAB amidotransferase (AdT) complex, composed of A, B and F subunits.

It is found in the mitochondrion inner membrane. The catalysed reaction is L-glutamyl-tRNA(Gln) + L-glutamine + ATP + H2O = L-glutaminyl-tRNA(Gln) + L-glutamate + ADP + phosphate + H(+). Its function is as follows. Allows the formation of correctly charged Gln-tRNA(Gln) through the transamidation of misacylated Glu-tRNA(Gln) in the mitochondria. The reaction takes place in the presence of glutamine and ATP through an activated gamma-phospho-Glu-tRNA(Gln). Required for proper protein synthesis within the mitochondrion. This Candida albicans (strain SC5314 / ATCC MYA-2876) (Yeast) protein is Glutamyl-tRNA(Gln) amidotransferase subunit F, mitochondrial.